A 359-amino-acid chain; its full sequence is MPKPGIMDIHAYVGGKSKVEGIAHPVKLSSNENILGSSDKAKDAYRNAVDRLHIYPDGKANFLRAAVAERYKLEPERLTFGDGSDEIFALLCQVYLEPGDNIVQGEHGFAAYAIGARACQGEVRMAKEVNHRVDIDEVIKCVDERTRLVFIANPANPTGTWLTGEEIRALHAALPPSVVLVLDGAYAEFCSDPHFEDGLELARTAENVIVTRTFSKIHGLAALRVGWGYAPEHIIAPIERIRPPFNTSIPAQEAAVAALFDDDFQDRSRALVEQWRPWLAQQLGGLGLEVTPSAANFVLATFPTTPGKTAPEAEAFLASKGYLVRAVGNYNLPHAIRITIGLEEQNRAVVELLSQFMGR.

Residue Lys-216 is modified to N6-(pyridoxal phosphate)lysine.

The protein belongs to the class-II pyridoxal-phosphate-dependent aminotransferase family. Histidinol-phosphate aminotransferase subfamily. Homodimer. It depends on pyridoxal 5'-phosphate as a cofactor.

It carries out the reaction L-histidinol phosphate + 2-oxoglutarate = 3-(imidazol-4-yl)-2-oxopropyl phosphate + L-glutamate. The protein operates within amino-acid biosynthesis; L-histidine biosynthesis; L-histidine from 5-phospho-alpha-D-ribose 1-diphosphate: step 7/9. This is Histidinol-phosphate aminotransferase 1 (hisC1) from Caulobacter vibrioides (strain ATCC 19089 / CIP 103742 / CB 15) (Caulobacter crescentus).